Consider the following 856-residue polypeptide: Translation initiation factor IF-2 (856 aa).

The tr-type G domain occupies P356–K526. The segment at G365 to T372 is G1. G365–T372 is a GTP binding site. Residues G390–H394 are G2. Positions D412–G415 are G3. Residues D412–H416 and N466–D469 each bind GTP. Positions N466 to D469 are G4. Positions S502–K504 are G5.

The protein belongs to the TRAFAC class translation factor GTPase superfamily. Classic translation factor GTPase family. IF-2 subfamily.

The protein localises to the cytoplasm. Its function is as follows. One of the essential components for the initiation of protein synthesis. Protects formylmethionyl-tRNA from spontaneous hydrolysis and promotes its binding to the 30S ribosomal subunits. Also involved in the hydrolysis of GTP during the formation of the 70S ribosomal complex. The polypeptide is Translation initiation factor IF-2 (Ehrlichia ruminantium (strain Welgevonden)).